Reading from the N-terminus, the 309-residue chain is NAD-dependent protein deacylase sirtuin-5B, mitochondrial (309 aa).

The transit peptide at 1–35 (MILLPFHTRRLVSHVYCGLKPASQNKGIALEMTRP) directs the protein to the mitochondrion. Residues 36–306 (SSNLANFREA…PPALARHETE (271 aa)) form the Deacetylase sirtuin-type domain. 57–76 (GAGVSAESGVPTIIGAGGYW) provides a ligand contact to NAD(+). Positions 101 and 104 each coordinate substrate. 139 to 142 (QNID) provides a ligand contact to NAD(+). Residue H157 is the Proton acceptor of the active site. Residues C165, C168, C206, and C211 each contribute to the Zn(2+) site. NAD(+) contacts are provided by residues 248–250 (GTS), 274–276 (NME), and C292.

The protein belongs to the sirtuin family. Class III subfamily. Requires Zn(2+) as cofactor.

It localises to the mitochondrion. Its subcellular location is the cytoplasm. The protein resides in the cytosol. The protein localises to the nucleus. It catalyses the reaction N(6)-malonyl-L-lysyl-[protein] + NAD(+) + H2O = 2''-O-malonyl-ADP-D-ribose + nicotinamide + L-lysyl-[protein]. The catalysed reaction is N(6)-succinyl-L-lysyl-[protein] + NAD(+) + H2O = 2''-O-succinyl-ADP-D-ribose + nicotinamide + L-lysyl-[protein]. It carries out the reaction N(6)-glutaryl-L-lysyl-[protein] + NAD(+) + H2O = 2''-O-glutaryl-ADP-D-ribose + nicotinamide + L-lysyl-[protein]. Functionally, NAD-dependent lysine demalonylase, desuccinylase and deglutarylase that specifically removes malonyl, succinyl and glutaryl groups on target proteins. Has weak NAD-dependent protein deacetylase activity; however this activity may not be physiologically relevant in vivo. The chain is NAD-dependent protein deacylase sirtuin-5B, mitochondrial (sirt5-b) from Xenopus laevis (African clawed frog).